We begin with the raw amino-acid sequence, 41 residues long: Photosystem II reaction center protein Y (41 aa).

Residues 4–22 (LIVVVLPILAAVTWVVFNI) form a helical membrane-spanning segment.

Belongs to the PsbY family. PSII is composed of 1 copy each of membrane proteins PsbA, PsbB, PsbC, PsbD, PsbE, PsbF, PsbH, PsbI, PsbJ, PsbK, PsbL, PsbM, PsbT, PsbX, PsbY, Psb30/Ycf12, peripheral proteins PsbO, CyanoQ (PsbQ), PsbU, PsbV and a large number of cofactors. It forms dimeric complexes.

The protein resides in the cellular thylakoid membrane. Its function is as follows. Loosely associated component of the core of photosystem II (PSII), it is not always seen in crystals. PSII is a light-driven water plastoquinone oxidoreductase, using light energy to abstract electrons from H(2)O, generating a proton gradient subsequently used for ATP formation. The polypeptide is Photosystem II reaction center protein Y (Prochlorococcus marinus (strain MIT 9211)).